We begin with the raw amino-acid sequence, 592 residues long: Aspartate--tRNA(Asp/Asn) ligase (592 aa).

Glu171 contacts L-aspartate. Positions 195–198 (QLFK) are aspartate. Residue Arg217 coordinates L-aspartate. Residues 217–219 (RDE) and Gln226 each bind ATP. His447 is a binding site for L-aspartate. Position 481 (Glu481) interacts with ATP. Arg488 is a binding site for L-aspartate. An ATP-binding site is contributed by 533-536 (GLDR).

This sequence belongs to the class-II aminoacyl-tRNA synthetase family. Type 1 subfamily. In terms of assembly, homodimer.

Its subcellular location is the cytoplasm. It carries out the reaction tRNA(Asx) + L-aspartate + ATP = L-aspartyl-tRNA(Asx) + AMP + diphosphate. Aspartyl-tRNA synthetase with relaxed tRNA specificity since it is able to aspartylate not only its cognate tRNA(Asp) but also tRNA(Asn). Reaction proceeds in two steps: L-aspartate is first activated by ATP to form Asp-AMP and then transferred to the acceptor end of tRNA(Asp/Asn). This chain is Aspartate--tRNA(Asp/Asn) ligase, found in Psychromonas ingrahamii (strain DSM 17664 / CCUG 51855 / 37).